The following is a 419-amino-acid chain: UDP-N-acetylglucosamine 1-carboxyvinyltransferase (419 aa).

Residue 22–23 (KN) coordinates phosphoenolpyruvate. UDP-N-acetyl-alpha-D-glucosamine is bound at residue Arg-93. Cys-117 acts as the Proton donor in catalysis. Cys-117 bears the 2-(S-cysteinyl)pyruvic acid O-phosphothioketal mark. Positions 306 and 328 each coordinate UDP-N-acetyl-alpha-D-glucosamine.

The protein belongs to the EPSP synthase family. MurA subfamily.

It localises to the cytoplasm. It carries out the reaction phosphoenolpyruvate + UDP-N-acetyl-alpha-D-glucosamine = UDP-N-acetyl-3-O-(1-carboxyvinyl)-alpha-D-glucosamine + phosphate. It functions in the pathway cell wall biogenesis; peptidoglycan biosynthesis. Its function is as follows. Cell wall formation. Adds enolpyruvyl to UDP-N-acetylglucosamine. In Thioalkalivibrio sulfidiphilus (strain HL-EbGR7), this protein is UDP-N-acetylglucosamine 1-carboxyvinyltransferase.